The following is a 353-amino-acid chain: Nicotinate-nucleotide--dimethylbenzimidazole phosphoribosyltransferase (353 aa).

The active-site Proton acceptor is the E320.

It belongs to the CobT family.

The catalysed reaction is 5,6-dimethylbenzimidazole + nicotinate beta-D-ribonucleotide = alpha-ribazole 5'-phosphate + nicotinate + H(+). It functions in the pathway nucleoside biosynthesis; alpha-ribazole biosynthesis; alpha-ribazole from 5,6-dimethylbenzimidazole: step 1/2. In terms of biological role, catalyzes the synthesis of alpha-ribazole-5'-phosphate from nicotinate mononucleotide (NAMN) and 5,6-dimethylbenzimidazole (DMB). The sequence is that of Nicotinate-nucleotide--dimethylbenzimidazole phosphoribosyltransferase from Pseudoalteromonas translucida (strain TAC 125).